Reading from the N-terminus, the 58-residue chain is Temporin-1Th (58 aa).

An N-terminal signal peptide occupies residues 1 to 22 (MFTLKKSLLLLFFLGTINLSLC). Residues 23–46 (EEERNAEEERRDEPDERDVQVEKR) constitute a propeptide that is removed on maturation. The segment at 25-46 (ERNAEEERRDEPDERDVQVEKR) is disordered. L56 carries the post-translational modification Leucine amide.

Expressed by the skin glands.

It localises to the secreted. Functionally, antimicrobial peptide that renders both the outer and inner membrane of bacteria permeable to hydrophobic substances of low molecular mass. The chain is Temporin-1Th from Rana temporaria (European common frog).